The following is a 112-amino-acid chain: Putative pterin-4-alpha-carbinolamine dehydratase (112 aa).

This sequence belongs to the pterin-4-alpha-carbinolamine dehydratase family.

The enzyme catalyses (4aS,6R)-4a-hydroxy-L-erythro-5,6,7,8-tetrahydrobiopterin = (6R)-L-erythro-6,7-dihydrobiopterin + H2O. This Shewanella frigidimarina (strain NCIMB 400) protein is Putative pterin-4-alpha-carbinolamine dehydratase.